The chain runs to 594 residues: (-)-endo-fenchol synthase, chloroplastic (594 aa).

A chloroplast-targeting transit peptide spans 1–50 (MSSLVMHVGIVNKPAITYLPTLSRRASNLHNVSSTRLQTSCSLQLDYKPV). Mg(2+) is bound by residues D348, D352, D492, and E500. The DDXXD motif motif lies at 348–352 (DDIYD).

Belongs to the terpene synthase family. Tpsa subfamily. It depends on Mg(2+) as a cofactor. Mn(2+) serves as cofactor. As to expression, expressed at low levels in leaves.

The protein localises to the plastid. It localises to the chloroplast. It carries out the reaction (2E)-geranyl diphosphate = alpha-pinene + diphosphate. The enzyme catalyses (2E)-geranyl diphosphate + H2O = (1S,2S,4R)-endo-fenchol + diphosphate. The catalysed reaction is (2E)-geranyl diphosphate = limonene + diphosphate. Its pathway is secondary metabolite biosynthesis; terpenoid biosynthesis. Functionally, monoterpene synthase involved in the biosynthesis of volatile compounds widely used in aromatherapy and folk medicine, and present in culinary herbs. Mediates the conversion of (2E)-geranyl diphosphate (GPP) into alpha fenchol, limonene and alpha-pinene and, as minor compounds, into beta-myrcene, alpha-terpinolene and alpha-phellandrene. This Lavandula stoechas (Butterfly lavender) protein is (-)-endo-fenchol synthase, chloroplastic.